The chain runs to 220 residues: Deoxyribose-phosphate aldolase 1 (220 aa).

Catalysis depends on aspartate 89, which acts as the Proton donor/acceptor. Lysine 151 functions as the Schiff-base intermediate with acetaldehyde in the catalytic mechanism. Lysine 180 functions as the Proton donor/acceptor in the catalytic mechanism.

Belongs to the DeoC/FbaB aldolase family. DeoC type 1 subfamily.

Its subcellular location is the cytoplasm. It carries out the reaction 2-deoxy-D-ribose 5-phosphate = D-glyceraldehyde 3-phosphate + acetaldehyde. It participates in carbohydrate degradation; 2-deoxy-D-ribose 1-phosphate degradation; D-glyceraldehyde 3-phosphate and acetaldehyde from 2-deoxy-alpha-D-ribose 1-phosphate: step 2/2. In terms of biological role, catalyzes a reversible aldol reaction between acetaldehyde and D-glyceraldehyde 3-phosphate to generate 2-deoxy-D-ribose 5-phosphate. This is Deoxyribose-phosphate aldolase 1 from Staphylococcus aureus (strain MSSA476).